We begin with the raw amino-acid sequence, 547 residues long: Cellodextrinase (547 aa).

Asp-148 acts as the Nucleophile in catalysis. Residues His-474, Asp-520, and Glu-529 contribute to the active site.

It belongs to the glycosyl hydrolase 9 (cellulase E) family.

The protein localises to the secreted. It catalyses the reaction Endohydrolysis of (1-&gt;4)-beta-D-glucosidic linkages in cellulose, lichenin and cereal beta-D-glucans.. Is not inhibited by methylcellulose. Functionally, glycoside hydrolase that rapidly hydrolyzes short-chain cellodextrins to yield either cellobiose or cellobiose and glucose as end products; cellobiose is not hydrolyzed further. Also shows limited activity against endoglucanase specific substrates (carboxymethylcellulose (CMC), lichenan, laminarin and xylan). The sequence is that of Cellodextrinase from Butyrivibrio fibrisolvens.